We begin with the raw amino-acid sequence, 83 residues long: Putative defensin-like protein 150 (83 aa).

Positions 1-25 are cleaved as a signal peptide; that stretch reads MMGKHIQLSFAILIMFTIFVLGAVG. 4 disulfide bridges follow: C35–C83, C44–C64, C49–C77, and C53–C79.

This sequence belongs to the DEFL family.

The protein resides in the secreted. The chain is Putative defensin-like protein 150 (LCR32) from Arabidopsis thaliana (Mouse-ear cress).